The sequence spans 428 residues: Sulfhydrogenase 1 subunit alpha (428 aa).

Ni(2+) is bound by residues Cys-65, Cys-68, Cys-418, and Cys-421. Cys-68 provides a ligand contact to Fe cation. Residue Cys-421 coordinates Fe cation.

The protein belongs to the [NiFe]/[NiFeSe] hydrogenase large subunit family. Heterotetramer of alpha, beta, gamma and delta subunits. The nickel-containing alpha and delta subunits constitute the hydrogenase activity. The beta and gamma subunits (flavin-containing dimer) constitute the sulfur reductase activity. Ni(2+) serves as cofactor. It depends on Fe cation as a cofactor.

Its subcellular location is the cytoplasm. The enzyme catalyses H2 + NADP(+) = NADPH + H(+). Functionally, part of a bifunctional enzyme complex that functions as an NADPH-dependent hydrogen-evolving hydrogenase with sulfur-reducing activity. May play a role in hydrogen cycling during fermentative growth. Activity not exhibited with NAD. The alpha and delta subunits form the hydrogenase component that catalyzes the reduction of protons to evolve hydrogen. The chain is Sulfhydrogenase 1 subunit alpha from Pyrococcus furiosus (strain ATCC 43587 / DSM 3638 / JCM 8422 / Vc1).